Here is a 272-residue protein sequence, read N- to C-terminus: D-aminoacyl-tRNA deacylase (272 aa).

Belongs to the DtdA deacylase family. As to quaternary structure, monomer. It depends on Zn(2+) as a cofactor.

The enzyme catalyses a D-aminoacyl-tRNA + H2O = a tRNA + a D-alpha-amino acid + H(+). The catalysed reaction is glycyl-tRNA(Ala) + H2O = tRNA(Ala) + glycine + H(+). Its function is as follows. D-aminoacyl-tRNA deacylase with broad substrate specificity. By recycling D-aminoacyl-tRNA to D-amino acids and free tRNA molecules, this enzyme counteracts the toxicity associated with the formation of D-aminoacyl-tRNA entities in vivo. This Desulfurococcus amylolyticus (strain DSM 18924 / JCM 16383 / VKM B-2413 / 1221n) (Desulfurococcus kamchatkensis) protein is D-aminoacyl-tRNA deacylase.